The following is a 507-amino-acid chain: ATP synthase subunit alpha, mitochondrial (507 aa).

171-178 (GDRQTGKT) lines the ATP pocket.

The protein belongs to the ATPase alpha/beta chains family. In terms of assembly, F-type ATPases have 2 components, CF(1) - the catalytic core - and CF(0) - the membrane proton channel. CF(1) has five subunits: alpha(3), beta(3), gamma(1), delta(1), epsilon(1). CF(0) has three main subunits: a, b and c.

The protein localises to the mitochondrion. It is found in the mitochondrion inner membrane. Functionally, mitochondrial membrane ATP synthase (F(1)F(0) ATP synthase or Complex V) produces ATP from ADP in the presence of a proton gradient across the membrane which is generated by electron transport complexes of the respiratory chain. F-type ATPases consist of two structural domains, F(1) - containing the extramembraneous catalytic core, and F(0) - containing the membrane proton channel, linked together by a central stalk and a peripheral stalk. During catalysis, ATP synthesis in the catalytic domain of F(1) is coupled via a rotary mechanism of the central stalk subunits to proton translocation. Subunits alpha and beta form the catalytic core in F(1). Rotation of the central stalk against the surrounding alpha(3)beta(3) subunits leads to hydrolysis of ATP in three separate catalytic sites on the beta subunits. Subunit alpha does not bear the catalytic high-affinity ATP-binding sites. This Arabidopsis thaliana (Mouse-ear cress) protein is ATP synthase subunit alpha, mitochondrial (ATPA).